Here is a 350-residue protein sequence, read N- to C-terminus: Galactokinase (350 aa).

15–18 (EHTD) is a substrate binding site. ATP is bound by residues serine 47 and 99–105 (GAGLSSS). Residues serine 105 and glutamate 137 each contribute to the Mg(2+) site. Aspartate 149 (proton acceptor) is an active-site residue. Residue tyrosine 198 participates in substrate binding.

Belongs to the GHMP kinase family. GalK subfamily.

The protein localises to the cytoplasm. It catalyses the reaction alpha-D-galactose + ATP = alpha-D-galactose 1-phosphate + ADP + H(+). It participates in carbohydrate metabolism; galactose metabolism. Catalyzes the transfer of the gamma-phosphate of ATP to D-galactose to form alpha-D-galactose-1-phosphate (Gal-1-P). The polypeptide is Galactokinase (Pyrococcus horikoshii (strain ATCC 700860 / DSM 12428 / JCM 9974 / NBRC 100139 / OT-3)).